Consider the following 427-residue polypeptide: Ribosome biogenesis protein WDR12 homolog (427 aa).

Positions leucine 13 to glutamate 97 are ubiquitin-like (UBL) domain. 7 WD repeats span residues leucine 109–isoleucine 146, glycine 148–glutamate 190, glycine 197–serine 236, glycine 260–glutamate 298, glycine 301–valine 339, glycine 345–phenylalanine 385, and glycine 389–lysine 427.

Belongs to the WD repeat WDR12/YTM1 family.

It localises to the nucleus. The protein localises to the nucleolus. It is found in the nucleoplasm. In terms of biological role, required for maturation of ribosomal RNAs and formation of the large ribosomal subunit. This chain is Ribosome biogenesis protein WDR12 homolog, found in Aedes aegypti (Yellowfever mosquito).